A 361-amino-acid chain; its full sequence is MKRVSRRAFLRRLGVGVAATAAFSPLAVAQARRYRWRIQTAWDAGTVGYSLFQKFTERVKELTDGQLEVQPFPAGAVVGTFDMFDAVKTGVLDGMNPFTLYWAGRMPVTAFLSSYALGLDRPDQWETWFYSLGGLDIARRAFAEQGLFYVGPVQHDLNIIHSKKPIRRFEDFKGVKLRVPGGMIAEVFAAAGASTVLLPGGEVYPALERGVIDAADFVGPAVNYNLGFHQVAKYIIMGPPETPAIHQPVDLMDFTINLNRWRSLPKPLQERFIAAVHEYSWIHYAGIQKANLEAWPKYRQAGVEVIRLSNEDVRKFRRLAIPIWFKWAKMDKYSREAFASQLEYMKGIGYVTDEELKGLSL.

A signal peptide (tat-type signal) is located at residues 1-22 (MKRVSRRAFLRRLGVGVAATAA). Residues Tyr-101, Asn-158, and Arg-178 each contribute to the substrate site. Residue Asn-158 coordinates Ca(2+). The Ca(2+) site is built by Asp-216, Phe-217, and Gln-247. Substrate contacts are provided by residues Phe-217 and 247–250 (QPVD).

It belongs to the bacterial solute-binding protein 7 family. Homodimer. The complex comprises the extracytoplasmic solute receptor protein TTHA0766, and the two putative transmembrane proteins TTHA0767 and TTHA0768.

It localises to the periplasm. Functionally, part of the tripartite ATP-independent periplasmic (TRAP) transport system involved in the uptake of lactate. This protein specifically binds L-lactate. The polypeptide is Lactate-binding periplasmic protein TTHA0766 (Thermus thermophilus (strain ATCC 27634 / DSM 579 / HB8)).